Here is a 381-residue protein sequence, read N- to C-terminus: Diguanylate cyclase DosC (381 aa).

Residue His-98 coordinates heme. The region spanning 325 to 381 (TPLSVLIIDVDKFKEINDTWGHNTGDEILRKVSFLSQKRLVKSKILGAGSSRKLAVS) is the GGDEF domain. Residue Asp-333 participates in Mg(2+) binding. Positions 341 and 350 each coordinate substrate.

It depends on heme as a cofactor. Mg(2+) is required as a cofactor.

The enzyme catalyses 2 GTP = 3',3'-c-di-GMP + 2 diphosphate. The protein operates within purine metabolism; 3',5'-cyclic di-GMP biosynthesis. Functionally, globin-coupled heme-based oxygen sensor protein displaying diguanylate cyclase (DGC) activity in response to oxygen availability. Thus, catalyzes the synthesis of cyclic diguanylate (c-di-GMP) via the condensation of 2 GTP molecules. Cyclic-di-GMP is a second messenger which controls cell surface-associated traits in bacteria. This is Diguanylate cyclase DosC (dosC) from Shigella flexneri serotype 5b (strain 8401).